We begin with the raw amino-acid sequence, 103 residues long: Histone H4, minor (103 aa).

The segment covering 1 to 12 has biased composition (gly residues); it reads MAGGKGGKGMGK. The disordered stretch occupies residues 1-29; that stretch reads MAGGKGGKGMGKVGAKRHSRKSNKASIEG. An N6-acetyllysine mark is found at K5, K8, K12, and K16. A compositionally biased stretch (basic residues) spans 14-23; the sequence is GAKRHSRKSN. Residues 16 to 21 mediate DNA binding; that stretch reads KRHSRK.

The protein belongs to the histone H4 family. In terms of assembly, the nucleosome is a histone octamer containing two molecules each of H2A, H2B, H3 and H4 assembled in one H3-H4 heterotetramer and two H2A-H2B heterodimers. The octamer wraps approximately 147 bp of DNA.

It is found in the nucleus. Its subcellular location is the chromosome. Functionally, core component of nucleosome. Nucleosomes wrap and compact DNA into chromatin, limiting DNA accessibility to the cellular machineries which require DNA as a template. Histones thereby play a central role in transcription regulation, DNA repair, DNA replication and chromosomal stability. DNA accessibility is regulated via a complex set of post-translational modifications of histones, also called histone code, and nucleosome remodeling. This Tetrahymena pyriformis protein is Histone H4, minor.